The following is a 1007-amino-acid chain: Glutamate receptor ionotropic, delta-2 (1007 aa).

The signal sequence occupies residues 1–23 (MEVFPLLLFLSFCWSRTWDLATA). Positions 24-345 (DSIIHIGAIF…NAFHKKLEDR (322 aa)) are interaction with CBLN1 homotrimer. Over 24 to 566 (DSIIHIGAIF…DMFACLAPFD (543 aa)) the chain is Extracellular. 3 disulfide bridges follow: Cys-83-Cys-355, Cys-99-Cys-131, and Cys-298-Cys-310. Asn-293 carries N-linked (GlcNAc...) asparagine glycosylation. Asn-426 carries N-linked (GlcNAc...) asparagine glycosylation. Ca(2+)-binding residues include Glu-531, Val-534, and Asp-535. The helical transmembrane segment at 567-587 (LSLWACIAGTVLLVGLLVYLL) threads the bilayer. Residues 588-635 (NWLNPPRLQMGSMTSTTLYNSMWFVYGSFVQQGGEVPYTTLATRMMMG) are Cytoplasmic-facing. The chain crosses the membrane as a helical span at residues 636-656 (AWWLFALIVISSYTANLAAFL). Residues 657–830 (TITRIESSIQ…QKGGALDIKS (174 aa)) are Extracellular-facing. N-linked (GlcNAc...) asparagine glycans are attached at residues Asn-713 and Asn-716. The Ca(2+) site is built by Asp-753, Asp-755, and Ser-757. Residues 831–851 (LAGVFCILAAGIVLSCLIAVL) form a helical membrane-spanning segment. Residues 852–1007 (ETWWSRRKGS…GNDPDRGTSI (156 aa)) lie on the Cytoplasmic side of the membrane. Residue Ser-883 is modified to Phosphoserine. Thr-886 carries the phosphothreonine modification. Ser-890 is subject to Phosphoserine. Residues 921–991 (DFRNTHITTT…MSSIPYQPTP (71 aa)) form an interaction with AP4M1 region. Residues 1005–1007 (TSI) carry the PDZ-binding motif. Residue Ser-1006 is modified to Phosphoserine.

The protein belongs to the glutamate-gated ion channel (TC 1.A.10.1) family. GRID2 subfamily. As to quaternary structure, tetramer; dimer of dimers. Interacts with EML2, MAGI2 (via PDZ domains) and AP4M1. Interacts with BECN1, GOPC, GRID2IP, SHANK1 and SHANK2. Interacts with CBLN2, but not with CBLN4. Interacts with CBLN1 (via C1q domain); the interaction is CBLN1-NRX1 complex formation-dependent; CBLN1-binding is calcium-independent; CBLN1 hexamers anchor GRID2 N-terminal domain dimers to monomeric NRXN1 isoform beta; promotes synaptogenesis and mediates the D-Serine-dependent long term depression signals and AMPA receptor endocytosis. As to expression, expressed selectively in cerebellar Purkinje cells where it is localized in dendritic spines.

The protein resides in the postsynaptic cell membrane. The catalysed reaction is Ca(2+)(in) = Ca(2+)(out). It carries out the reaction Na(+)(in) = Na(+)(out). In terms of biological role, member of the ionotropic glutamate receptor family, which plays a crucial role in synaptic organization and signal transduction in the central nervous system. Although it shares structural features with ionotropic glutamate receptors, does not bind glutamate as a primary ligand. Promotes synaptogenesis and mediates the D-Serine-dependent long term depression signals and AMPA receptor endocytosis of cerebellar parallel fiber-Purkinje cell (PF-PC) synapses through the NRX1B-CBLN1-GRID2 triad complex. In the presence of neurexins and cerebellins, forms cation-selective channels that are proposed to be gated by glycine and D-serine. However, recent research disputes this ligand-gated cation channel activity. Cation-selective ion channel activity can be triggered by GRM1 in Purkinje cells. This chain is Glutamate receptor ionotropic, delta-2 (Grid2), found in Mus musculus (Mouse).